Reading from the N-terminus, the 151-residue chain is Lectin-like protein BA14k (151 aa).

The signal sequence occupies residues 1 to 26; sequence MNIFKQTCVGAFAVIFGATSIAPTMA. The helical transmembrane segment at 83-103 threads the bilayer; the sequence is GWWYPLAAFGAGAIIGGAVSQ.

The protein belongs to the BA14k family.

It is found in the cell membrane. Its function is as follows. Has immunoglobulin-binding and hemagglutination properties, and can bind to mannose. Essential for virulence. May be involved in LPS biosynthesis or polysaccharide transport. The chain is Lectin-like protein BA14k from Brucella anthropi (strain ATCC 49188 / DSM 6882 / CCUG 24695 / JCM 21032 / LMG 3331 / NBRC 15819 / NCTC 12168 / Alc 37) (Ochrobactrum anthropi).